A 253-amino-acid chain; its full sequence is Glutamate racemase (253 aa).

Residues 7 to 8 and 39 to 40 contribute to the substrate site; these read DS and YG. Cysteine 70 acts as the Proton donor/acceptor in catalysis. 71–72 is a substrate binding site; sequence NT. Cysteine 180 functions as the Proton donor/acceptor in the catalytic mechanism. 181–182 is a substrate binding site; the sequence is TH.

It belongs to the aspartate/glutamate racemases family.

The catalysed reaction is L-glutamate = D-glutamate. The protein operates within cell wall biogenesis; peptidoglycan biosynthesis. In terms of biological role, provides the (R)-glutamate required for cell wall biosynthesis. This Halothermothrix orenii (strain H 168 / OCM 544 / DSM 9562) protein is Glutamate racemase.